The chain runs to 322 residues: Protein SEC13 homolog (322 aa).

N-acetylvaline is present on Val2. 6 WD repeats span residues 11–50 (SHEDMIHDAQMDYYGTRLATCSSDRSVKIFDVRNGGQILI), 55–96 (GHEG…WEKS), 101–144 (GHDS…EVKK), 148–204 (AHTI…QWKE), 210–253 (AHSD…SNTW), and 260–299 (KFNDVVWHVSWSITANILAVSGGDNKVTLWKESVDGQWVC). Ser184 is subject to Phosphoserine. Ser309 carries the post-translational modification Phosphoserine.

The protein belongs to the WD repeat SEC13 family. As to quaternary structure, at the nuclear pore: component of the Y-shaped Nup107-160 subcomplex of the nuclear pore complex (NPC). The Nup107-160 subcomplex includes NUP160, NUP133, NUP107, NUP98, NUP85, NUP43, NUP37, SEH1 and SEC13. At the COPII coat complex: interacts with SEC31A and SEC31B. Interacts with SEC16A. Interacts with SEC16B. Component of the GATOR2 subcomplex, composed of MIOS, SEC13, SEH1L, WDR24 and WDR59. The GATOR2 complex interacts with CASTOR1 and CASTOR2; the interaction is negatively regulated by arginine. The GATOR2 complex interacts with SESN1, SESN2 and SESN3; the interaction is negatively regulated by amino acids.

Its subcellular location is the cytoplasmic vesicle. The protein resides in the COPII-coated vesicle membrane. It is found in the endoplasmic reticulum membrane. It localises to the nucleus. The protein localises to the nuclear pore complex. Its subcellular location is the lysosome membrane. With respect to regulation, the GATOR2 complex is negatively regulated by the upstream amino acid sensors CASTOR1 and SESN2, which sequester the GATOR2 complex in absence of amino acids. In the presence of abundant amino acids, GATOR2 is released from CASTOR1 and SESN2 and activated. Functions as a component of the nuclear pore complex (NPC) and the COPII coat. At the endoplasmic reticulum, SEC13 is involved in the biogenesis of COPII-coated vesicles. Required for the exit of adipsin (CFD/ADN), an adipocyte-secreted protein from the endoplasmic reticulum. Its function is as follows. As a component of the GATOR2 complex, functions as an activator of the amino acid-sensing branch of the mTORC1 signaling pathway. The GATOR2 complex indirectly activates mTORC1 through the inhibition of the GATOR1 subcomplex. GATOR2 probably acts as an E3 ubiquitin-protein ligase toward GATOR1. In the presence of abundant amino acids, the GATOR2 complex mediates ubiquitination of the NPRL2 core component of the GATOR1 complex, leading to GATOR1 inactivation. In the absence of amino acids, GATOR2 is inhibited, activating the GATOR1 complex. Within the GATOR2 complex, SEC13 and SEH1L are required to stabilize the complex. In Homo sapiens (Human), this protein is Protein SEC13 homolog.